A 657-amino-acid polypeptide reads, in one-letter code: Transcription factor 12 (657 aa).

The span at 1-20 shows a compositional bias: polar residues; it reads MDEKGGTTSWGTSGQPSPSY. 5 disordered regions span residues 1–76, 89–285, 297–340, 459–555, and 628–657; these read MDEK…SGLS, LGSP…QTGD, PDHT…YENS, VSAQ…ERRM, and KVSA…MGHM. Over residues 30–43 the composition is skewed to basic and acidic residues; the sequence is HYSDHLNDSRKGTH. Polar residues-rich tracts occupy residues 49–70 and 93–112; these read TPFS…SLYS and AQLS…SATS. The leucine-zipper stretch occupies residues 68 to 89; that stretch reads LYSRDSGLSGCQSSLLRQELGL. The Nuclear localization signal signature appears at 130–136; that stretch reads KKVRKVP. Composition is skewed to polar residues over residues 168–193, 202–216, and 230–254; these read MFAS…NGMS, GTST…SYGS, and VSPT…SSSP. Residues 300 to 311 are compositionally biased toward low complexity; it reads TSSSFPSNPSTP. Residues 312 to 340 are compositionally biased toward polar residues; that stretch reads VGSPSPLTGASQWSRSGGQAPSSPNYENS. Basic and acidic residues-rich tracts occupy residues 493 to 505, 511 to 526, and 543 to 555; these read IKSE…ENIH, DDMK…DIKV, and PEQK…ERRM. The region spanning 552-605 is the bHLH domain; that stretch reads ERRMANNARERLRVRDINEAFKELGRMCQLHLKSEKPQTKLLILHQAVAVILSL. Positions 607-630 are class A specific domain; the sequence is QQVRERNLNPKAACLKRREEEKVS. Polar residues predominate over residues 648 to 657; it reads SETTNPMGHM.

As to quaternary structure, efficient DNA binding requires dimerization with another bHLH protein. Forms homo- or heterooligomers with myogenin, E12 and ITF2 proteins.

It is found in the nucleus. Functionally, transcriptional regulator. Involved in the initiation of neuronal differentiation. Activates transcription by binding to the E box-containing promoter. The protein is Transcription factor 12 (TCF12) of Gallus gallus (Chicken).